The sequence spans 610 residues: MIKKIIHRPKRSLFVFKKEESLLYGPRVKSAPPIEISFEPPAKIEPKLAVRFTRADGTPIRKEDLLDSTDSEILSESSVESETEVENIPQEADTGNTREESEECQREAGAEEEPRPALEDRALMLDNLLKRFSEQKIAENRGPCYSVDEILSVEDRKAISLELKIKTRKEAKGVYRPDNNRKDTCIEQARLEFNRLTAKNIGLVIKNLKAIRVGTIEEMKEIAKILFDKAISEPTFVKYYALLVLDLKKEWQSEEEKTRDITQTVFFGTLLTLTLKTLENKERWGDEYERRKEMSFEERMAYEEKLEEAETERYIKKRRTLGTIDFLSSLYSLNVISYVHMNACINTLMKLDDSENVEVLCYLIENIGEKLVVSGKEHIISMVCSSLAQKKNSYTNRIRYMIESLLDKRSSWKPREAKAGNVFSCLEVENDYGNAQNQGSQESPSEDVLPFLSSLSEELSVAYEDDDKELLSDSLQSGESKFGVIPFYLSYFQEAISNHKVSDLLSDFFISFRSTSSITEEQLREVLLSLKGDLDVLKIDFPISPKKYSELITKLRASKVISQPLFEELKTSDYNSRATDIILRWYKSDRDREKALTIFPSEAIENLIRK.

The disordered stretch occupies residues 59 to 118 (PIRKEDLLDSTDSEILSESSVESETEVENIPQEADTGNTREESEECQREAGAEEEPRPAL). Basic and acidic residues predominate over residues 96–118 (NTREESEECQREAGAEEEPRPAL). The region spanning 175-414 (YRPDNNRKDT…LLDKRSSWKP (240 aa)) is the MIF4G domain.

It belongs to the eukaryotic initiation factor 4G family. In terms of assembly, component of the eIF4F complex, which composition varies with external and internal environmental conditions.

Its subcellular location is the cytoplasm. In terms of biological role, component of the protein complex eIF4F, which is involved in the recognition of the mRNA cap, ATP-dependent unwinding of 5'-terminal secondary structure and recruitment of mRNA to the ribosome. This is Probable eukaryotic translation initiation factor 4 gamma homolog (EIF4G) from Encephalitozoon cuniculi (strain GB-M1) (Microsporidian parasite).